Here is a 178-residue protein sequence, read N- to C-terminus: Ribosome maturation factor RimP (178 aa).

It belongs to the RimP family.

The protein resides in the cytoplasm. Its function is as follows. Required for maturation of 30S ribosomal subunits. The sequence is that of Ribosome maturation factor RimP from Streptococcus pyogenes serotype M1.